Here is a 1385-residue protein sequence, read N- to C-terminus: Coiled-coil domain-containing protein 7 (1385 aa).

Residues 299–330 (LDAEYKQMQCDFQLLSEEKLVLENELQKLKDK) adopt a coiled-coil conformation. Residues 329–364 (DKEKTKPTNNRTKKAVKTVKKKDKGKSEDSEKKMSP) form a disordered region. Residues 339 to 352 (RTKKAVKTVKKKDK) show a composition bias toward basic residues. Residues 353–364 (GKSEDSEKKMSP) show a composition bias toward basic and acidic residues. The stretch at 374 to 411 (LDQVQKVARLEIENKVLQEQLKQALQEAEKAKHQLNYF) forms a coiled coil. Disordered regions lie at residues 422 to 545 (GKTE…SKEV), 572 to 752 (TESK…EPNE), and 809 to 834 (TKKLPREKRHSTHDEESGENPMLKHQ). Positions 425 to 436 (ETTMQVGNSQTK) are enriched in polar residues. Basic and acidic residues-rich tracts occupy residues 437–455 (VKGEDSKNIPLEKETRKSL) and 481–490 (LIEKSSEKKR). Polar residues-rich tracts occupy residues 493–503 (PAISDLSQILK), 511–528 (LESSNEVSVAENQSYKSP), and 536–545 (LTTVSSSKEV). Residues 573–589 (ESKKADVSEEQLQKMTE) are compositionally biased toward basic and acidic residues. Over residues 654-664 (RIQSETKNLKA) the composition is skewed to polar residues. Basic and acidic residues-rich tracts occupy residues 665–676 (TRNESFHSHNDV) and 685–697 (QDTKSKTEVEVKK). Over residues 701-711 (FQDNQLSTHNE) the composition is skewed to polar residues. A compositionally biased stretch (basic and acidic residues) spans 712-726 (VPNERLVVEHQESLS).

As to expression, expressed in epithelium of normal cervix and cervical cancer. Overexpressed in early and interim cervical cancer.

May play a role in tumorigenesis. The polypeptide is Coiled-coil domain-containing protein 7 (CCDC7) (Homo sapiens (Human)).